Here is a 192-residue protein sequence, read N- to C-terminus: Rhomboid protease GlpG (192 aa).

The Cytoplasmic segment spans residues 1–10 (MKNFLAQQGK). Residues 11–31 (ITLILTALCVLIYLAQQLGFE) form a helical membrane-spanning segment. Over 32–57 (DDIMYLMHYPAYEEQDSEVWRYISHT) the chain is Periplasmic. The chain crosses the membrane as a helical span at residues 58–78 (LVHLSNLHILFNLSWFFIFGG). Topologically, residues 79 to 82 (MIER) are cytoplasmic. Residues 83–103 (TFGSVKLLMLYVVASAITGYV) form a helical membrane-spanning segment. Over 104-107 (QNYV) the chain is Periplasmic. Residues 108–128 (SGPAFFGLSGVVYAVLGYVFI) form a helical membrane-spanning segment. Residue Ser-116 is the Nucleophile of the active site. The Cytoplasmic portion of the chain corresponds to 129–141 (RDKLNHHLFDLPE). The chain crosses the membrane as a helical span at residues 142 to 162 (GFFTMLLVGIALGFISPLFGV). A topological domain (periplasmic) is located at residue Glu-163. A helical membrane pass occupies residues 164–184 (MGNAAHISGLIVGLIWGFIDS). His-169 is a catalytic residue. Residues 185–192 (KLRKNSLE) are Cytoplasmic-facing.

Belongs to the peptidase S54 family.

Its subcellular location is the cell inner membrane. The enzyme catalyses Cleaves type-1 transmembrane domains using a catalytic dyad composed of serine and histidine that are contributed by different transmembrane domains.. Functionally, rhomboid-type serine protease that catalyzes intramembrane proteolysis. The protein is Rhomboid protease GlpG (glpG) of Haemophilus influenzae (strain ATCC 51907 / DSM 11121 / KW20 / Rd).